The sequence spans 104 residues: Large ribosomal subunit protein bL21 (104 aa).

The protein belongs to the bacterial ribosomal protein bL21 family. Part of the 50S ribosomal subunit. Contacts protein L20.

Its function is as follows. This protein binds to 23S rRNA in the presence of protein L20. The sequence is that of Large ribosomal subunit protein bL21 from Alkalilimnicola ehrlichii (strain ATCC BAA-1101 / DSM 17681 / MLHE-1).